The following is a 261-amino-acid chain: Ribonuclease HII (261 aa).

Positions 71–259 constitute an RNase H type-2 domain; it reads KYIAGVDEVG…VKEAKLHFDS (189 aa). A divalent metal cation contacts are provided by Asp77, Glu78, and Asp169.

Belongs to the RNase HII family. The cofactor is Mn(2+). It depends on Mg(2+) as a cofactor.

The protein localises to the cytoplasm. The catalysed reaction is Endonucleolytic cleavage to 5'-phosphomonoester.. Functionally, endonuclease that specifically degrades the RNA of RNA-DNA hybrids. This chain is Ribonuclease HII, found in Listeria monocytogenes serotype 4b (strain F2365).